Reading from the N-terminus, the 709-residue chain is Meiotic sister-chromatid recombination protein 6, mitochondrial (709 aa).

The transit peptide at 1–29 (MLRINQRLLVRSLRDAQYQYLKSTALRFL) directs the protein to the mitochondrion.

The protein localises to the mitochondrion. May be involved in the control of meiotic sister-chromatid recombination. The polypeptide is Meiotic sister-chromatid recombination protein 6, mitochondrial (MSC6) (Candida glabrata (strain ATCC 2001 / BCRC 20586 / JCM 3761 / NBRC 0622 / NRRL Y-65 / CBS 138) (Yeast)).